Reading from the N-terminus, the 750-residue chain is Photosystem I P700 chlorophyll a apoprotein A1 (750 aa).

The next 8 helical transmembrane spans lie at 70 to 93, 156 to 179, 195 to 219, 291 to 309, 346 to 369, 385 to 411, 433 to 455, and 531 to 549; these read VFSAHFGQLSIIFLWLSGMYFHGA, LYCTAIGALIFAALMLFAGWFHYH, LNHHLAGLLGLGSLSWAGHQVHVSL, IAHHHLAIAILFLIAGHMY, WHAQLSLNLAMLGSLTIIVAHHMY, LSLFTHHMWIGGFLIVGAAAHAAIFMV, AIISHLNWACIFLGFHSFGLYIH, and FLVHHIHAFTIHVTVLILL. The [4Fe-4S] cluster site is built by cysteine 573 and cysteine 582. The next 2 membrane-spanning stretches (helical) occupy residues 589 to 610 and 664 to 686; these read HVFLGLFWMYNAISVVIFHFSW and LSAYGLFFLGAHFVWAFSLMFLF. Histidine 675 provides a ligand contact to chlorophyll a'. Residues methionine 683 and tyrosine 691 each contribute to the chlorophyll a site. Tryptophan 692 is a phylloquinone binding site. A helical membrane pass occupies residues 724–744; that stretch reads AVGVTHYLLGGIATTWAFFLA.

It belongs to the PsaA/PsaB family. In terms of assembly, the PsaA/B heterodimer binds the P700 chlorophyll special pair and subsequent electron acceptors. PSI consists of a core antenna complex that captures photons, and an electron transfer chain that converts photonic excitation into a charge separation. The eukaryotic PSI reaction center is composed of at least 11 subunits. The cofactor is P700 is a chlorophyll a/chlorophyll a' dimer, A0 is one or more chlorophyll a, A1 is one or both phylloquinones and FX is a shared 4Fe-4S iron-sulfur center..

It localises to the plastid. The protein localises to the chloroplast thylakoid membrane. The catalysed reaction is reduced [plastocyanin] + hnu + oxidized [2Fe-2S]-[ferredoxin] = oxidized [plastocyanin] + reduced [2Fe-2S]-[ferredoxin]. PsaA and PsaB bind P700, the primary electron donor of photosystem I (PSI), as well as the electron acceptors A0, A1 and FX. PSI is a plastocyanin-ferredoxin oxidoreductase, converting photonic excitation into a charge separation, which transfers an electron from the donor P700 chlorophyll pair to the spectroscopically characterized acceptors A0, A1, FX, FA and FB in turn. Oxidized P700 is reduced on the lumenal side of the thylakoid membrane by plastocyanin. The protein is Photosystem I P700 chlorophyll a apoprotein A1 of Daucus carota (Wild carrot).